A 508-amino-acid chain; its full sequence is ATP synthase subunit alpha (508 aa).

170-177 (GDRQTGKT) serves as a coordination point for ATP.

This sequence belongs to the ATPase alpha/beta chains family. F-type ATPases have 2 components, CF(1) - the catalytic core - and CF(0) - the membrane proton channel. CF(1) has five subunits: alpha(3), beta(3), gamma(1), delta(1), epsilon(1). CF(0) has three main subunits: a(1), b(2) and c(9-12). The alpha and beta chains form an alternating ring which encloses part of the gamma chain. CF(1) is attached to CF(0) by a central stalk formed by the gamma and epsilon chains, while a peripheral stalk is formed by the delta and b chains.

The protein localises to the cell inner membrane. The catalysed reaction is ATP + H2O + 4 H(+)(in) = ADP + phosphate + 5 H(+)(out). Its function is as follows. Produces ATP from ADP in the presence of a proton gradient across the membrane. The alpha chain is a regulatory subunit. The protein is ATP synthase subunit alpha of Dictyoglomus turgidum (strain DSM 6724 / Z-1310).